A 145-amino-acid polypeptide reads, in one-letter code: Transcription antitermination protein NusB (145 aa).

The protein belongs to the NusB family.

Functionally, involved in transcription antitermination. Required for transcription of ribosomal RNA (rRNA) genes. Binds specifically to the boxA antiterminator sequence of the ribosomal RNA (rrn) operons. In Citrifermentans bemidjiense (strain ATCC BAA-1014 / DSM 16622 / JCM 12645 / Bem) (Geobacter bemidjiensis), this protein is Transcription antitermination protein NusB.